A 140-amino-acid polypeptide reads, in one-letter code: PDZ domain-containing protein 11 (140 aa).

The region spanning 47–129 (TITLKKPPGA…ISMRVRFFPY (83 aa)) is the PDZ domain.

Interacts with ATP2B1, ATP2B2, ATP2B3, ATP2B4 and ATP7A. Interacts with PLEKHA7 (via WW domains) at zonula adherens; this interaction is essential for the interaction between PLEKHA7 and the ADAM10-binding protein TSPAN33. Interacts with SLC5A6. As to expression, widely expressed (at protein level).

It is found in the secreted. It localises to the cytoplasm. The protein localises to the cell junction. Its subcellular location is the adherens junction. The protein resides in the cell membrane. Its function is as follows. Mediates docking of ADAM10 to zonula adherens by interacting with PLEKHA7 which is required for PLEKHA7 to interact with the ADAM10-binding protein TSPAN33. This Homo sapiens (Human) protein is PDZ domain-containing protein 11 (PDZD11).